Reading from the N-terminus, the 103-residue chain is Small ribosomal subunit protein uS10 (103 aa).

It belongs to the universal ribosomal protein uS10 family. Part of the 30S ribosomal subunit.

Involved in the binding of tRNA to the ribosomes. The protein is Small ribosomal subunit protein uS10 of Chlorobium limicola (strain DSM 245 / NBRC 103803 / 6330).